Consider the following 331-residue polypeptide: DNA fragmentation factor subunit alpha (331 aa).

Position 1 is an N-acetylmethionine (M1). In terms of domain architecture, CIDE-N spans P17–Y96. Position 243 is a phosphothreonine (T243). Positions L306–S331 are disordered.

Heterodimer of DFFA and DFFB. Post-translationally, caspase-3 cleaves DFF45 at 2 sites to generate an active factor.

Its subcellular location is the cytoplasm. In terms of biological role, inhibitor of the caspase-activated DNase (DFF40). The chain is DNA fragmentation factor subunit alpha (Dffa) from Mus musculus (Mouse).